The following is a 376-amino-acid chain: UDP-N-acetylglucosamine 2-epimerase (376 aa).

Residues R10, K15, D95, E117, H213, Q271, F276, 290 to 292 (SGG), E296, and R313 contribute to the substrate site.

Belongs to the UDP-N-acetylglucosamine 2-epimerase family. Homodimer.

The protein localises to the cytoplasm. The catalysed reaction is UDP-N-acetyl-alpha-D-glucosamine = UDP-N-acetyl-alpha-D-mannosamine. The protein operates within bacterial outer membrane biogenesis; enterobacterial common antigen biosynthesis. Functionally, catalyzes the reversible epimerization at C-2 of UDP-N-acetylglucosamine (UDP-GlcNAc) and thereby provides bacteria with UDP-N-acetylmannosamine (UDP-ManNAc), the activated donor of ManNAc residues. This chain is UDP-N-acetylglucosamine 2-epimerase, found in Salmonella typhimurium (strain LT2 / SGSC1412 / ATCC 700720).